We begin with the raw amino-acid sequence, 868 residues long: Leucine--tRNA ligase (868 aa).

Positions 42–52 (PYPSGKLHMGH) match the 'HIGH' region motif. The 'KMSKS' region motif lies at 627–631 (KMSKS). K630 contacts ATP.

This sequence belongs to the class-I aminoacyl-tRNA synthetase family.

It is found in the cytoplasm. It carries out the reaction tRNA(Leu) + L-leucine + ATP = L-leucyl-tRNA(Leu) + AMP + diphosphate. This chain is Leucine--tRNA ligase, found in Pseudomonas entomophila (strain L48).